Reading from the N-terminus, the 1202-residue chain is PAN2-PAN3 deadenylation complex catalytic subunit PAN2 (1202 aa).

4 WD repeats span residues 153–193, 195–231, 244–280, and 328–367; these read DENE…QKYA, ETPG…VEHE, VHGN…AITP, and PVGP…SFNP. The segment at 368-485 is linker; it reads YSRETEFALP…VGREEEPHLH (118 aa). The USP domain occupies 486–924; sequence MVSKKYRKVT…VPAILYYVKR (439 aa). Phosphoserine is present on serine 791. The Exonuclease domain maps to 975–1147; that stretch reads VGLDAEFVTL…EDARTALQLY (173 aa). A divalent metal cation contacts are provided by aspartate 978, glutamate 980, aspartate 1087, and aspartate 1139. Serine 1189 carries the phosphoserine modification.

It belongs to the peptidase C19 family. PAN2 subfamily. As to quaternary structure, forms a heterotrimer with an asymmetric homodimer of the regulatory subunit PAN3 to form the poly(A)-nuclease (PAN) deadenylation complex. Interacts with PAN3 isoform 1/Pan3L and isoform 3/Pan3S. Interacts with ZFP36. The cofactor is a divalent metal cation.

It localises to the cytoplasm. Its subcellular location is the P-body. The protein localises to the nucleus. The catalysed reaction is Exonucleolytic cleavage of poly(A) to 5'-AMP.. Positively regulated by the regulatory subunit PAN3. In terms of biological role, catalytic subunit of the poly(A)-nuclease (PAN) deadenylation complex, one of two cytoplasmic mRNA deadenylases involved in general and miRNA-mediated mRNA turnover. PAN specifically shortens poly(A) tails of RNA and the activity is stimulated by poly(A)-binding protein (PABP). PAN deadenylation is followed by rapid degradation of the shortened mRNA tails by the CCR4-NOT complex. Deadenylated mRNAs are then degraded by two alternative mechanisms, namely exosome-mediated 3'-5' exonucleolytic degradation, or deadenylation-dependent mRNA decaping and subsequent 5'-3' exonucleolytic degradation by XRN1. Also acts as an important regulator of the HIF1A-mediated hypoxic response. Required for HIF1A mRNA stability independent of poly(A) tail length regulation. The chain is PAN2-PAN3 deadenylation complex catalytic subunit PAN2 from Homo sapiens (Human).